The chain runs to 233 residues: Antilisterial bacteriocin subtilosin biosynthesis protein AlbG (233 aa).

Helical transmembrane passes span 7–27 (FTLL…VQAV), 46–66 (GLLA…LHYV), 116–136 (TYVM…FEIV), 145–165 (TPPA…LFCM), 176–198 (GSLF…MLSF), and 203–220 (LLFL…SFIY).

The protein resides in the cell membrane. In terms of biological role, involved in the production of the bacteriocin subtilosin. This chain is Antilisterial bacteriocin subtilosin biosynthesis protein AlbG (albG), found in Bacillus subtilis (strain 168).